The chain runs to 264 residues: Protein ADMETOS (264 aa).

As to expression, paternally imprinted expression in the endosperm.

In terms of biological role, product of a dosage-sensitive gene that contributes to the maintenance of paternally and maternally imprinted gene expression in the endosperm in order to balance parental contributions. Underlies postzygotic reproductive isolation by promoting triploid seed arrest in a genetic dosage-dependent manner, thus being a component of postzygotic interploidy hybridization barriers. The chain is Protein ADMETOS from Arabidopsis thaliana (Mouse-ear cress).